Here is a 208-residue protein sequence, read N- to C-terminus: Small ribosomal subunit protein uS4A (208 aa).

Residues 98–161 (LRLDNVVFRM…RKVLRISEAL (64 aa)) enclose the S4 RNA-binding domain.

This sequence belongs to the universal ribosomal protein uS4 family. As to quaternary structure, part of the 30S ribosomal subunit. Contacts protein S5. The interaction surface between S4 and S5 is involved in control of translational fidelity.

Its function is as follows. One of the primary rRNA binding proteins, it binds directly to 16S rRNA where it nucleates assembly of the body of the 30S subunit. In terms of biological role, with S5 and S12 plays an important role in translational accuracy. This is Small ribosomal subunit protein uS4A from Myxococcus xanthus (strain DK1622).